The chain runs to 944 residues: Putative alpha,alpha-trehalose-phosphate synthase [UDP-forming] 106 kDa subunit (944 aa).

Residues Thr-73–Pro-84 are compositionally biased toward polar residues. Disordered regions lie at residues Thr-73 to Ser-113 and Ser-129 to Glu-166. Low complexity predominate over residues Pro-101 to Ser-113. Phosphoserine is present on residues Ser-141, Ser-145, Ser-149, Ser-150, Ser-163, and Ser-177. The interval Ser-173 to Glu-652 is glycosyltransferase. Phosphothreonine is present on Thr-189.

The protein in the N-terminal section; belongs to the glycosyltransferase 20 family.

The enzyme catalyses D-glucose 6-phosphate + UDP-alpha-D-glucose = alpha,alpha-trehalose 6-phosphate + UDP + H(+). This chain is Putative alpha,alpha-trehalose-phosphate synthase [UDP-forming] 106 kDa subunit, found in Schizosaccharomyces pombe (strain 972 / ATCC 24843) (Fission yeast).